Reading from the N-terminus, the 208-residue chain is Glycerol-3-phosphate acyltransferase (208 aa).

The next 5 membrane-spanning stretches (helical) occupy residues 4 to 24 (LALS…AVLI), 56 to 76 (VAVL…GYFL), 80 to 100 (PFML…PIFF), 117 to 137 (PIGL…VVLF), and 139 to 159 (YSSL…WLIK).

The protein belongs to the PlsY family. In terms of assembly, probably interacts with PlsX.

Its subcellular location is the cell inner membrane. The enzyme catalyses an acyl phosphate + sn-glycerol 3-phosphate = a 1-acyl-sn-glycero-3-phosphate + phosphate. The protein operates within lipid metabolism; phospholipid metabolism. Its function is as follows. Catalyzes the transfer of an acyl group from acyl-phosphate (acyl-PO(4)) to glycerol-3-phosphate (G3P) to form lysophosphatidic acid (LPA). This enzyme utilizes acyl-phosphate as fatty acyl donor, but not acyl-CoA or acyl-ACP. The chain is Glycerol-3-phosphate acyltransferase from Vibrio cholerae serotype O1 (strain ATCC 39541 / Classical Ogawa 395 / O395).